The sequence spans 275 residues: Methylglyoxal reductase DkgA (275 aa).

The active-site Proton donor is the Tyr51. A substrate-binding site is contributed by His107. 187 to 241 provides a ligand contact to NADP(+); it reads SPLAQGGEGVFDQKVIRELADKYGKTPAQIVIRWHLDCGLVVIPKSVTPSRIAEN.

The protein belongs to the aldo/keto reductase family. As to quaternary structure, monomer.

It is found in the cytoplasm. The enzyme catalyses hydroxyacetone + NADP(+) = methylglyoxal + NADPH + H(+). Its function is as follows. Aldo-keto reductase that significantly contributes to cellular methylglyoxal detoxification by catalyzing the NADPH-dependent conversion of methylglyoxal to acetol. The polypeptide is Methylglyoxal reductase DkgA (Salmonella typhimurium (strain LT2 / SGSC1412 / ATCC 700720)).